A 172-amino-acid chain; its full sequence is NADH-quinone oxidoreductase subunit B (172 aa).

Cys46, Cys47, Cys111, and Cys141 together coordinate [4Fe-4S] cluster.

Belongs to the complex I 20 kDa subunit family. NDH-1 is composed of 14 different subunits. Subunits NuoB, C, D, E, F, and G constitute the peripheral sector of the complex. [4Fe-4S] cluster serves as cofactor.

It is found in the cell membrane. The catalysed reaction is a quinone + NADH + 5 H(+)(in) = a quinol + NAD(+) + 4 H(+)(out). NDH-1 shuttles electrons from NADH, via FMN and iron-sulfur (Fe-S) centers, to quinones in the respiratory chain. The immediate electron acceptor for the enzyme in this species is believed to be a menaquinone. Couples the redox reaction to proton translocation (for every two electrons transferred, four hydrogen ions are translocated across the cytoplasmic membrane), and thus conserves the redox energy in a proton gradient. This is NADH-quinone oxidoreductase subunit B from Brevibacillus brevis (strain 47 / JCM 6285 / NBRC 100599).